Reading from the N-terminus, the 524-residue chain is Alkaline phosphatase, tissue-nonspecific isozyme (524 aa).

Residues 1 to 17 (MISPFLVLAIGTCLTNS) form the signal peptide. A Mg(2+)-binding site is contributed by aspartate 60. Zn(2+) contacts are provided by aspartate 60 and serine 110. Serine 110 (phosphoserine intermediate) is an active-site residue. The residue at position 110 (serine 110) is a Phosphoserine. An intrachain disulfide couples cysteine 139 to cysteine 201. N-linked (GlcNAc...) asparagine glycosylation is present at asparagine 140. Residue threonine 173 coordinates Mg(2+). Asparagine 230 is a glycosylation site (N-linked (GlcNAc...) asparagine). A Ca(2+)-binding site is contributed by glutamate 235. N-linked (GlcNAc...) asparagine glycosylation is present at asparagine 271. Residues phenylalanine 290 and glutamate 291 each coordinate Ca(2+). A glycan (N-linked (GlcNAc...) asparagine) is linked at asparagine 302. A Ca(2+)-binding site is contributed by aspartate 306. Glutamate 332 provides a ligand contact to Mg(2+). 4 residues coordinate Zn(2+): aspartate 337, histidine 341, aspartate 378, and histidine 379. Asparagine 430 carries an N-linked (GlcNAc...) asparagine glycan. Histidine 454 lines the Zn(2+) pocket. Cysteine 489 and cysteine 497 are joined by a disulfide. Serine 499 carries the GPI-anchor amidated serine lipid modification. The propeptide at 500–524 (ASSAGGPSPGPLFLLLALPSLGILF) is removed in mature form.

The protein belongs to the alkaline phosphatase family. In terms of assembly, homodimer. Mg(2+) is required as a cofactor. Requires Zn(2+) as cofactor. The cofactor is Ca(2+). In terms of processing, N-glycosylated.

It is found in the cell membrane. The protein localises to the extracellular vesicle membrane. Its subcellular location is the mitochondrion membrane. It localises to the mitochondrion intermembrane space. It carries out the reaction a phosphate monoester + H2O = an alcohol + phosphate. The catalysed reaction is diphosphate + H2O = 2 phosphate + H(+). It catalyses the reaction pyridoxal 5'-phosphate + H2O = pyridoxal + phosphate. The enzyme catalyses phosphoethanolamine + H2O = ethanolamine + phosphate. It carries out the reaction N-phosphocreatine + H2O = creatine + phosphate. The catalysed reaction is ATP + H2O = ADP + phosphate + H(+). It catalyses the reaction ADP + H2O = AMP + phosphate + H(+). The enzyme catalyses AMP + H2O = adenosine + phosphate. Its activity is regulated as follows. Phosphatase activity is specifically inhibited by 5-((5-chloro-2-methoxyphenyl)sulfonamido)nicotinamide (SBI-425). In terms of biological role, alkaline phosphatase that metabolizes various phosphate compounds and plays a key role in skeletal mineralization and adaptive thermogenesis. Has broad substrate specificity and can hydrolyze a considerable variety of compounds: however, only a few substrates, such as diphosphate (inorganic pyrophosphate; PPi), pyridoxal 5'-phosphate (PLP) and N-phosphocreatine are natural substrates. Plays an essential role in skeletal and dental mineralization via its ability to hydrolyze extracellular diphosphate, a potent mineralization inhibitor, to phosphate: it thereby promotes hydroxyapatite crystal formation and increases inorganic phosphate concentration. Acts in a non-redundant manner with PHOSPHO1 in skeletal mineralization: while PHOSPHO1 mediates the initiation of hydroxyapatite crystallization in the matrix vesicles (MVs), ALPL/TNAP catalyzes the spread of hydroxyapatite crystallization in the extracellular matrix. Also promotes dephosphorylation of osteopontin (SSP1), an inhibitor of hydroxyapatite crystallization in its phosphorylated state; it is however unclear whether ALPL/TNAP mediates SSP1 dephosphorylation via a direct or indirect manner. Catalyzes dephosphorylation of PLP to pyridoxal (PL), the transportable form of vitamin B6, in order to provide a sufficient amount of PLP in the brain, an essential cofactor for enzymes catalyzing the synthesis of diverse neurotransmitters. Additionally, also able to mediate ATP degradation in a stepwise manner to adenosine, thereby regulating the availability of ligands for purinergic receptors. Also capable of dephosphorylating microbial products, such as lipopolysaccharides (LPS) as well as other phosphorylated small-molecules, such as poly-inosine:cytosine (poly I:C). Acts as a key regulator of adaptive thermogenesis as part of the futile creatine cycle: localizes to the mitochondria of thermogenic fat cells and acts by mediating hydrolysis of N-phosphocreatine to initiate a futile cycle of creatine dephosphorylation and phosphorylation. During the futile creatine cycle, creatine and N-phosphocreatine are in a futile cycle, which dissipates the high energy charge of N-phosphocreatine as heat without performing any mechanical or chemical work. This chain is Alkaline phosphatase, tissue-nonspecific isozyme (ALPL), found in Felis catus (Cat).